Here is a 188-residue protein sequence, read N- to C-terminus: Acyl-acyl carrier protein thioesterase ATL2, chloroplastic (188 aa).

Residues 1–47 (MFQATSTGAQIMHAAFPRSWRRGHVLPLRSAKIFKPLACLELRGSTG) constitute a chloroplast transit peptide. The active site involves aspartate 64.

The protein belongs to the 4-hydroxybenzoyl-CoA thioesterase family. Expressed in endodermal and peridermal cells in young and mature roots, in boundaries of stem lateral organs and developing seeds.

The protein localises to the plastid. The protein resides in the chloroplast. In terms of biological role, acyl-ACP thioesterase involved in the production of fatty acids and beta-keto fatty acids. Can produce beta-keto fatty acids of medium chain (8:0 and 10:0) and small amounts of 8:0 fatty acid when expressed in a heterologous organism (E.coli). May play a role in suberin biosynthesis. This Arabidopsis thaliana (Mouse-ear cress) protein is Acyl-acyl carrier protein thioesterase ATL2, chloroplastic.